The chain runs to 163 residues: Transcription elongation factor GreB (163 aa).

Positions 54-76 (GKRRMREIDRRIRFLTKRLEAAV) form a coiled coil.

The protein belongs to the GreA/GreB family. GreB subfamily.

In terms of biological role, necessary for efficient RNA polymerase transcription elongation past template-encoded arresting sites. The arresting sites in DNA have the property of trapping a certain fraction of elongating RNA polymerases that pass through, resulting in locked ternary complexes. Cleavage of the nascent transcript by cleavage factors such as GreA or GreB allows the resumption of elongation from the new 3'terminus. GreB releases sequences of up to 9 nucleotides in length. This is Transcription elongation factor GreB from Neisseria meningitidis serogroup B (strain ATCC BAA-335 / MC58).